Reading from the N-terminus, the 737-residue chain is Catalase-peroxidase (737 aa).

The segment at 1 to 33 is disordered; that stretch reads MPEATEHPPIGEAQTEPAQSGCPMVIKPPVEGG. The tryptophyl-tyrosyl-methioninium (Trp-Tyr) (with M-261) cross-link spans 107–235; sequence WHAAGTYRVQ…LGASHMGLIY (129 aa). Residue His108 is the Proton acceptor of the active site. The segment at residues 235–261 is a cross-link (tryptophyl-tyrosyl-methioninium (Tyr-Met) (with W-107)); sequence YVNPEGPEGNPDPIAAAIDIRETFGRM. His276 provides a ligand contact to heme.

This sequence belongs to the peroxidase family. Peroxidase/catalase subfamily. In terms of assembly, homodimer or homotetramer. The cofactor is heme b. In terms of processing, formation of the three residue Trp-Tyr-Met cross-link is important for the catalase, but not the peroxidase activity of the enzyme.

The catalysed reaction is H2O2 + AH2 = A + 2 H2O. The enzyme catalyses 2 H2O2 = O2 + 2 H2O. Its function is as follows. Bifunctional enzyme with both catalase and broad-spectrum peroxidase activity. May play a role in polycyclic aromatic hydrocarbon (PAH) metabolism. The sequence is that of Catalase-peroxidase from Mycolicibacterium vanbaalenii (Mycobacterium vanbaalenii).